Consider the following 1381-residue polypeptide: DNA-directed RNA polymerase subunit beta'' (1381 aa).

Residues C224, C295, C302, and C305 each contribute to the Zn(2+) site.

This sequence belongs to the RNA polymerase beta' chain family. RpoC2 subfamily. As to quaternary structure, in plastids the minimal PEP RNA polymerase catalytic core is composed of four subunits: alpha, beta, beta', and beta''. When a (nuclear-encoded) sigma factor is associated with the core the holoenzyme is formed, which can initiate transcription. Zn(2+) is required as a cofactor.

It is found in the plastid. The protein localises to the chloroplast. The enzyme catalyses RNA(n) + a ribonucleoside 5'-triphosphate = RNA(n+1) + diphosphate. Functionally, DNA-dependent RNA polymerase catalyzes the transcription of DNA into RNA using the four ribonucleoside triphosphates as substrates. The sequence is that of DNA-directed RNA polymerase subunit beta'' from Guizotia abyssinica (Niger).